Consider the following 359-residue polypeptide: Type-1 angiotensin II receptor (359 aa).

The Extracellular portion of the chain corresponds to 1–25 (MMLNSSTEDGIKRIQDDCPKAGRHN). A glycan (N-linked (GlcNAc...) asparagine) is linked at Asn4. Residues Gln15 and Asp17 each contribute to the angiotensin II site. Cystine bridges form between Cys18-Cys274 and Cys101-Cys180. A helical transmembrane segment spans residues 26–55 (YIFVMIPTLYSIIFVVGIFGNSLAVIVIYF). The Cytoplasmic segment spans residues 56 to 61 (YMKLKT). The chain crosses the membrane as a helical span at residues 62–89 (VASVFLLNLALADLCFLLTLPLWAVYTA). Over 90–98 (MEYRWPFGN) the chain is Extracellular. A helical membrane pass occupies residues 99–125 (YLCKIASASVSFNLYASVFLLTCLSID). At 126 to 141 (RYLAIVHPMKSRLRRT) the chain is on the cytoplasmic side. A helical transmembrane segment spans residues 142–165 (MLVAKVTCIIIWLLAGLASLPAII). At 166–190 (HRNVFFIENTNITVCAFHYESQNST) the chain is on the extracellular side. Arg167 contributes to the angiotensin II binding site. Asn176 carries an N-linked (GlcNAc...) asparagine glycan. Positions 182, 183, and 184 each coordinate angiotensin II. The N-linked (GlcNAc...) asparagine glycan is linked to Asn188. The chain crosses the membrane as a helical span at residues 191 to 216 (LPIGLGLTKNILGFLFPFLIILTSYT). Angiotensin II is bound at residue Lys199. Over 217–239 (LIWKALKKAYEIQKNKPRNDDIF) the chain is Cytoplasmic. A helical membrane pass occupies residues 240–268 (KIIMAIVLFFFFSWVPHQIFTFLDVLIQL). Over 269–278 (GVIHDCRIAD) the chain is Extracellular. A helical transmembrane segment spans residues 279-304 (IVDTAMPITICIAYFNNCLNPLFYGF). Residues 305–359 (LGKKFKKYFLQLLKYIPPKAKSHSNLSTKMSTLSYRPSDNVSSSSKKPVPCFEVE) lie on the Cytoplasmic side of the membrane. The segment covering 335-350 (STLSYRPSDNVSSSSK) has biased composition (polar residues). A disordered region spans residues 335 to 359 (STLSYRPSDNVSSSSKKPVPCFEVE). Cys355 carries the S-palmitoyl cysteine lipid modification.

The protein belongs to the G-protein coupled receptor 1 family. Interacts with MAS1. Interacts with ARRB1. Interacts with FLNA (via filamin repeat 21); increases PKA-mediated phosphorylation of FLNA. Post-translationally, C-terminal Ser or Thr residues may be phosphorylated.

The protein resides in the cell membrane. Functionally, receptor for angiotensin II, a vasoconstricting peptide, which acts as a key regulator of blood pressure and sodium retention by the kidney. The activated receptor in turn couples to G-alpha proteins G(q) (GNAQ, GNA11, GNA14 or GNA15) and thus activates phospholipase C and increases the cytosolic Ca(2+) concentrations, which in turn triggers cellular responses such as stimulation of protein kinase C. The chain is Type-1 angiotensin II receptor (AGTR1) from Oryctolagus cuniculus (Rabbit).